Consider the following 487-residue polypeptide: MSTHYIAGQWRPGQGAPLQSLDPVSQAVVWQGQGASAAQVDEAVNAARGAFSLWAAHSLDGRIAVLERFAAALKSHADELARAIGEETGKPLWEAATEVTSMVNKVAISIQSYRERTGEKSGPLADATAVLRHKPHGVVAVFGPYNFPGHLPNGHIVPALLAGNCVLFKPSELTPKVAELTVKCWIEAGLPAGVLNLLQGGRETGVALAGHPGIDGLFFTGSSRTGNLLHAQFAGRPDKILALEMGGNNPLIVDQVADIDAAVYTIVQSAFISAGQRCTCARRLLVPQGQWGDALLARLVQVAGQLKVGRFDEQPAPFMGSVISLQAAAQLMQAQADLLAKGATALLAMTQPQADAALLTPGILDVTAVSERPDEEFFGPLLQVIRYSDFDGAIAEANTTAFGLAAGLLSDSKARYEQFWLHSRAGIVNWNKQLTGAASTAPFGGIGASGNHRASAYYAADYCAYPVASLESEALTLPTTLTPGVTL.

An NAD(+)-binding site is contributed by 221-226; that stretch reads GSSRTG. Active-site residues include glutamate 244 and cysteine 278.

The protein belongs to the aldehyde dehydrogenase family. AstD subfamily.

The catalysed reaction is N-succinyl-L-glutamate 5-semialdehyde + NAD(+) + H2O = N-succinyl-L-glutamate + NADH + 2 H(+). It participates in amino-acid degradation; L-arginine degradation via AST pathway; L-glutamate and succinate from L-arginine: step 4/5. In terms of biological role, catalyzes the NAD-dependent reduction of succinylglutamate semialdehyde into succinylglutamate. The polypeptide is N-succinylglutamate 5-semialdehyde dehydrogenase (Ectopseudomonas mendocina (strain ymp) (Pseudomonas mendocina)).